The chain runs to 455 residues: Phosphoglycerate kinase, glycosomal (455 aa).

The (2R)-3-phosphoglycerate site is built by Val-23, Asp-24, Phe-25, Asn-26, Arg-39, Ser-61, His-62, Gly-64, Arg-65, Arg-132, His-168, and Arg-169. 2 residues coordinate ADP: Gly-214 and Ala-215. Residue Gly-214 coordinates CDP. AMP contacts are provided by Ala-215 and Lys-216. Ala-215 provides a ligand contact to ATP. Ala-215 contacts Mg(2+). Lys-216 is a binding site for (2R)-3-phosphoglycerate. Asp-219 provides a ligand contact to CDP. Asp-219 is a Mg(2+) binding site. ADP-binding residues include Lys-220 and Gly-238. Position 220 (Lys-220) interacts with AMP. Position 220 (Lys-220) interacts with ATP. Gly-238 is a binding site for CDP. Residues Ala-239 and Ala-311 each coordinate AMP. ATP contacts are provided by Ala-239 and Ala-311. Residues Ala-311 and Asn-335 each contribute to the ADP site. The CDP site is built by Gly-336 and Phe-341. Phe-341, Glu-342, Asp-374, and Thr-375 together coordinate ADP. Position 342 (Glu-342) interacts with AMP. 3 residues coordinate ATP: Glu-342, Asp-374, and Thr-375. A Mg(2+)-binding site is contributed by Asp-374. The topogenic signal stretch occupies residues 417–455; it reads DAKAPAAAAAAGGDCPCGSGCAAVPAAATATVSMVLASP.

Belongs to the phosphoglycerate kinase family. In terms of assembly, monomer. Mg(2+) is required as a cofactor.

The protein localises to the glycosome. The enzyme catalyses (2R)-3-phosphoglycerate + ATP = (2R)-3-phospho-glyceroyl phosphate + ADP. Its pathway is carbohydrate degradation; glycolysis; pyruvate from D-glyceraldehyde 3-phosphate: step 2/5. In Crithidia fasciculata, this protein is Phosphoglycerate kinase, glycosomal (PGKC).